Reading from the N-terminus, the 382-residue chain is MTSSPTVNLLDLDAAGLVAYCDSLGEKPFRAKQLQRWIHQYNAADFDGMTDLAKSLREKLKGRASITMPPVVSDHISSDGTRKWLVDVGNGNAVETVYIPEETRGTLCVSSQAGCAVNCRFCSTGKQGFSRNLGTGEIIGQLRMAEFALRASRGTAGGRATGGDGKGERVVTNVVMMGMGEPLLNYDAVVPAMRLMLDDNAYGLSRRRVTLSTSGVVPMMDRLGADLPVALAVSLHAPNDALRDELVPLNKKYPLRELMAACQRYLKVAPRDFITFEYCMLDGVNDSEAHARELLAVTRDVPCKFNLIPFNPFPESGLLRSKSEQIKRFAQVLMDAGVVTTVRKTRGDDIDAACGQLAGAVKDRTRLAERTGKGKVIEVRAV.

Catalysis depends on E95, which acts as the Proton acceptor. Positions 101 to 349 (EETRGTLCVS…TTVRKTRGDD (249 aa)) constitute a Radical SAM core domain. C108 and C354 are oxidised to a cystine. Residues C115, C119, and C122 each contribute to the [4Fe-4S] cluster site. S-adenosyl-L-methionine contacts are provided by residues 180–181 (GE), S212, 234–236 (SLH), and N311. C354 functions as the S-methylcysteine intermediate in the catalytic mechanism.

The protein belongs to the radical SAM superfamily. RlmN family. [4Fe-4S] cluster serves as cofactor.

The protein localises to the cytoplasm. It carries out the reaction adenosine(2503) in 23S rRNA + 2 reduced [2Fe-2S]-[ferredoxin] + 2 S-adenosyl-L-methionine = 2-methyladenosine(2503) in 23S rRNA + 5'-deoxyadenosine + L-methionine + 2 oxidized [2Fe-2S]-[ferredoxin] + S-adenosyl-L-homocysteine. The catalysed reaction is adenosine(37) in tRNA + 2 reduced [2Fe-2S]-[ferredoxin] + 2 S-adenosyl-L-methionine = 2-methyladenosine(37) in tRNA + 5'-deoxyadenosine + L-methionine + 2 oxidized [2Fe-2S]-[ferredoxin] + S-adenosyl-L-homocysteine. Specifically methylates position 2 of adenine 2503 in 23S rRNA and position 2 of adenine 37 in tRNAs. m2A2503 modification seems to play a crucial role in the proofreading step occurring at the peptidyl transferase center and thus would serve to optimize ribosomal fidelity. The polypeptide is Dual-specificity RNA methyltransferase RlmN (Paraburkholderia phymatum (strain DSM 17167 / CIP 108236 / LMG 21445 / STM815) (Burkholderia phymatum)).